A 258-amino-acid polypeptide reads, in one-letter code: Transcription factor RSL3 (258 aa).

The short motif at 98-105 (RKLLDVEN) is the D-box element. Residues 119–178 (ELAKSKKKQRVSSESNTVDESNTNWVDGQSLSNSSDDEKASVTSVKGKTRATKGTATDPQ) form a disordered region. A compositionally biased stretch (polar residues) spans 130–152 (SSESNTVDESNTNWVDGQSLSNS). The interval 173–186 (TATDPQSLYARKRR) is basic motif. Residues 173 to 222 (TATDPQSLYARKRREKINERLKTLQNLVPNGTKVDISTMLEEAVHYVKFL) enclose the bHLH domain. The helix-loop-helix motif stretch occupies residues 187–222 (EKINERLKTLQNLVPNGTKVDISTMLEEAVHYVKFL).

Homodimer. Ubiquitinated. Ubiquitination leads to its subsequent degradation by the 26S proteasome. Expressed constitutively in roots, leaves, and flowers. Expressed in root epidermal hair cells.

It is found in the nucleus. In terms of biological role, transcription factor involved in the regulation of root hair elongation. Is sufficient to promote postmitotic cell growth in root-hair cells and is a direct transcriptional target of RHD6 and RSL1. Involved in the regulation of root hair elongation in response to low phosphate. Controls root hair cell growth by regulating the expression of genes encoding proteins involved in cell signaling, cell wall modification and secretion. The sequence is that of Transcription factor RSL3 from Arabidopsis thaliana (Mouse-ear cress).